Reading from the N-terminus, the 579-residue chain is Ribonucleoside-diphosphate reductase small chain (579 aa).

Fe cation is bound by residues aspartate 130, glutamate 160, and histidine 163. Residue tyrosine 167 is part of the active site. The Fe cation site is built by glutamate 225, glutamate 258, and histidine 261. One can recognise a Fido domain in the interval 435–579 (DMTWTLKDVH…VSVFVDQFYR (145 aa)).

The protein belongs to the ribonucleoside diphosphate reductase small chain family. As to quaternary structure, heterotetramer composed of a homodimer of the large subunit (R1) and a homodimer of the small subunit (R2). Larger multisubunit protein complex are also active, composed of (R1)n(R2)n. Fe cation serves as cofactor.

The catalysed reaction is a 2'-deoxyribonucleoside 5'-diphosphate + [thioredoxin]-disulfide + H2O = a ribonucleoside 5'-diphosphate + [thioredoxin]-dithiol. Ribonucleoside-diphosphate reductase holoenzyme provides the precursors necessary for viral DNA synthesis. Allows virus growth in non-dividing cells. Catalyzes the biosynthesis of deoxyribonucleotides from the corresponding ribonucleotides. This Magallana gigas (Pacific oyster) protein is Ribonucleoside-diphosphate reductase small chain.